The primary structure comprises 471 residues: Probable lysophospholipase BODYGUARD 2 (471 aa).

A signal peptide spans 1–45 (MGIARWLNRTVGFFVFALLDIADFLLCYTYKTLDYFLESERKPCY). Cys-46 carries the N-palmitoyl cysteine lipid modification. Residues 193–296 (VVFIHGFVSS…AIKSLTLLAP (104 aa)) form the AB hydrolase-1 domain. His-197 is a catalytic residue. The Nucleophile role is filled by Ser-271. Active-site charge relay system residues include Asp-418 and His-446.

It localises to the cell membrane. Its subcellular location is the secreted. It is found in the cell wall. Its function is as follows. Involved in cuticle development and morphogenesis. In Arabidopsis thaliana (Mouse-ear cress), this protein is Probable lysophospholipase BODYGUARD 2.